Consider the following 381-residue polypeptide: uncharacterized protein (381 aa).

Polar residues predominate over residues 331 to 340 (MQNGYANNGR). Residues 331–381 (MQNGYANNGRNHQRERFERPEKNSKKNKFLPFNGSNKEKKRDKLKKNCVIM) are disordered. The segment covering 342 to 354 (HQRERFERPEKNS) has biased composition (basic and acidic residues). Basic residues predominate over residues 372–381 (DKLKKNCVIM).

The protein resides in the cytoplasm. The protein localises to the nucleus. This is an uncharacterized protein from Saccharomyces cerevisiae (strain ATCC 204508 / S288c) (Baker's yeast).